The primary structure comprises 356 residues: Viral cathepsin (356 aa).

The N-terminal stretch at 1 to 40 is a signal peptide; the sequence is MYANALVCLNPSFIKLQFHIVCTMNIIGIVTLALCSAASA. A propeptide spans 41 to 144 (activation peptide); it reads ADEGAAYNLQ…IILNQPPDKG (104 aa). 3 disulfide bridges follow: Cys-165–Cys-206, Cys-199–Cys-239, and Cys-295–Cys-343. Residue Cys-168 is part of the active site. Residues His-302 and Asn-322 contribute to the active site.

Belongs to the peptidase C1 family. Post-translationally, synthesized as an inactive proenzyme and activated by proteolytic removal of the inhibitory propeptide.

It carries out the reaction Endopeptidase of broad specificity, hydrolyzing substrates of both cathepsin L and cathepsin B.. In terms of biological role, cysteine protease that plays an essential role in host liquefaction to facilitate horizontal transmission of the virus. May participate in the degradation of foreign protein expressed by the baculovirus system. In Lepidoptera (butterflies and moths), this protein is Viral cathepsin (VCATH).